Consider the following 125-residue polypeptide: uncharacterized protein (125 aa).

4 helical membrane passes run 9–29 (IANA…TLTG), 33–53 (GEKT…NMVV), 56–76 (IVQV…TLVV), and 100–120 (FWTA…LNAF).

Its subcellular location is the cell membrane. This is an uncharacterized protein from Streptomyces coelicolor (strain ATCC BAA-471 / A3(2) / M145).